A 320-amino-acid polypeptide reads, in one-letter code: Cytochrome f (320 aa).

Residues 1–35 form the signal peptide; sequence MQTRNTLSWIKEEITRSISVSLMIYIITWASISNA. Residues Tyr-36, Cys-56, Cys-59, and His-60 each contribute to the heme site. A helical membrane pass occupies residues 286–306; sequence VQGLLFFLASVVLAQIFLVLK.

It belongs to the cytochrome f family. In terms of assembly, the 4 large subunits of the cytochrome b6-f complex are cytochrome b6, subunit IV (17 kDa polypeptide, petD), cytochrome f and the Rieske protein, while the 4 small subunits are PetG, PetL, PetM and PetN. The complex functions as a dimer. Requires heme as cofactor.

The protein resides in the plastid. It localises to the chloroplast thylakoid membrane. Its function is as follows. Component of the cytochrome b6-f complex, which mediates electron transfer between photosystem II (PSII) and photosystem I (PSI), cyclic electron flow around PSI, and state transitions. In Carica papaya (Papaya), this protein is Cytochrome f.